A 352-amino-acid chain; its full sequence is 4-hydroxy-3-methylbut-2-en-1-yl diphosphate synthase (flavodoxin) (352 aa).

Positions 262, 265, 297, and 304 each coordinate [4Fe-4S] cluster.

It belongs to the IspG family. It depends on [4Fe-4S] cluster as a cofactor.

The catalysed reaction is (2E)-4-hydroxy-3-methylbut-2-enyl diphosphate + oxidized [flavodoxin] + H2O + 2 H(+) = 2-C-methyl-D-erythritol 2,4-cyclic diphosphate + reduced [flavodoxin]. It participates in isoprenoid biosynthesis; isopentenyl diphosphate biosynthesis via DXP pathway; isopentenyl diphosphate from 1-deoxy-D-xylulose 5-phosphate: step 5/6. Converts 2C-methyl-D-erythritol 2,4-cyclodiphosphate (ME-2,4cPP) into 1-hydroxy-2-methyl-2-(E)-butenyl 4-diphosphate. In Campylobacter curvus (strain 525.92), this protein is 4-hydroxy-3-methylbut-2-en-1-yl diphosphate synthase (flavodoxin).